The primary structure comprises 238 residues: Single-stranded DNA-binding protein WHY2, mitochondrial (238 aa).

Residues 1 to 29 constitute a mitochondrion transit peptide; it reads MMKQARSLLSRSLCDQSKSLFEASTLRGF. The segment at 62–67 is required for ssDNA binding; it reads KGKAAL.

This sequence belongs to the Whirly family. In terms of assembly, homotetramer.

The protein localises to the mitochondrion. In terms of biological role, single-stranded DNA-binding protein that associates with mitochondrial DNA and may play a role in the regulation of the gene expression machinery. Also seems to be required to prevent break-induced DNA rearrangements in the mitochondrial genome. Can bind to melt double-stranded DNA in vivo. The protein is Single-stranded DNA-binding protein WHY2, mitochondrial (WHY2) of Arabidopsis thaliana (Mouse-ear cress).